Reading from the N-terminus, the 347-residue chain is Aurora kinase A- and ninein-interacting protein (347 aa).

Residues Gln-182–His-347 form an interaction with AURKA region. The tract at residues Arg-273–His-347 is interaction with RBBP8/CtIP. Phosphoserine is present on Ser-284. Positions Val-301 to Asp-322 are enriched in polar residues. The disordered stretch occupies residues Val-301–Thr-325.

Belongs to the AUNIP family. In terms of assembly, interacts (via C-terminus) with AURKA (via C-terminus). Interacts (via N-terminus) with NIN; this interaction blocks NIN phosphorylation by both AURKA and GSK3B. Identified in a complex with NIN and AURKA. Interacts with RBBP8/CtIP.

Its subcellular location is the nucleus. It localises to the chromosome. The protein localises to the cytoplasm. It is found in the cytoskeleton. The protein resides in the microtubule organizing center. Its subcellular location is the centrosome. It localises to the spindle pole. DNA-binding protein that accumulates at DNA double-strand breaks (DSBs) following DNA damage and promotes DNA resection and homologous recombination. Serves as a sensor of DNA damage: binds DNA with a strong preference for DNA substrates that mimic structures generated at stalled replication forks, and anchors RBBP8/CtIP to DSB sites to promote DNA end resection and ensuing homologous recombination repair. Inhibits non-homologous end joining (NHEJ). Required for the dynamic movement of AURKA at the centrosomes and spindle apparatus during the cell cycle. The polypeptide is Aurora kinase A- and ninein-interacting protein (Rattus norvegicus (Rat)).